A 148-amino-acid chain; its full sequence is 3-dehydroquinate dehydratase (148 aa).

Y23 (proton acceptor) is an active-site residue. Substrate contacts are provided by N75, H81, and D88. H101 serves as the catalytic Proton donor. Residues 102 to 103 (MS) and R112 each bind substrate.

This sequence belongs to the type-II 3-dehydroquinase family. Homododecamer.

It catalyses the reaction 3-dehydroquinate = 3-dehydroshikimate + H2O. The protein operates within metabolic intermediate biosynthesis; chorismate biosynthesis; chorismate from D-erythrose 4-phosphate and phosphoenolpyruvate: step 3/7. In terms of biological role, catalyzes a trans-dehydration via an enolate intermediate. This is 3-dehydroquinate dehydratase from Syntrophotalea carbinolica (strain DSM 2380 / NBRC 103641 / GraBd1) (Pelobacter carbinolicus).